The following is a 434-amino-acid chain: Protein POLLENLESS 3 (434 aa).

Residues 13-47 (VYYTPPPARTSDHVAAMPMTERRRPPYSCSSSSER) form a disordered region. The short motif at 34-37 (RRRP) is the Nuclear localization signal 1 element. TPR repeat units follow at residues 95–131 (DSALKDMAVVMKQLGRSDEGIEAIKSFRYLCSFESQD), 133–164 (IDNLLLELYKKSGRIEEEAVLLEHKLQTLEQG), 191–224 (ARILGNLGWVHLQLHNYGIAEQHYRRALGLERDK), and 241–274 (PEAKSLLDDVRDSPAESECGDEPFAKSYDRAVEM). Positions 142–166 (KKSGRIEEEAVLLEHKLQTLEQGMG) form a coiled coil. Positions 309–329 (TANKNYSDVSSSPASVRPNSA) are disordered. A compositionally biased stretch (polar residues) spans 310–326 (ANKNYSDVSSSPASVRP). The Nuclear localization signal 2 motif lies at 377–380 (KRKK). Residues 393–408 (VKDTADGPKSESKKSW) are compositionally biased toward basic and acidic residues. The tract at residues 393 to 434 (VKDTADGPKSESKKSWADIAEEEEAEEEEEERLQGELKTAEM) is disordered. A coiled-coil region spans residues 408–434 (WADIAEEEEAEEEEEERLQGELKTAEM). A compositionally biased stretch (acidic residues) spans 411–423 (IAEEEEAEEEEEE). Residues 424–434 (RLQGELKTAEM) are compositionally biased toward basic and acidic residues.

The protein belongs to the MS5 protein family. Expressed at low levels mostly in floral organs during meiosis. Also barely detectable in leaves, stems and roots.

The protein resides in the nucleus. Essential for male fertility, especially for microspore and pollen grain production. Involved in the regulation of cell division after male meiosis I and II to facilitate exit from meiosis and transition to G1. The protein is Protein POLLENLESS 3 of Arabidopsis thaliana (Mouse-ear cress).